A 788-amino-acid polypeptide reads, in one-letter code: E3 ubiquitin-protein ligase SspH2 (788 aa).

Residues methionine 1 to phenylalanine 481 form an interaction with host membrane and with target proteins region. LRR repeat units follow at residues histidine 223–proline 242, glutamate 243–leucine 264, leucine 265–serine 282, glycine 283–proline 302, glycine 303–leucine 324, cysteine 325–serine 342, glycine 343–leucine 364, tyrosine 365–serine 382, glycine 383–leucine 404, lysine 405–serine 422, glycine 423–serine 445, and serine 446–arginine 466. The tract at residues aspartate 482–glutamate 491 is linker. Residues threonine 492 to asparagine 788 form an E3 ubiquitin-protein ligase catalytic domain region. Positions alanine 494–asparagine 788 constitute an NEL domain. Catalysis depends on cysteine 580, which acts as the Glycyl thioester intermediate.

The protein belongs to the LRR-containing bacterial E3 ligase family. In terms of processing, ubiquitinated in the presence of host E1 ubiquitin-activating enzyme UBA1, E2 ubiquitin-conjugating enzyme UBE2D2 and ubiquitin.

Its subcellular location is the secreted. The protein localises to the host cytoplasm. It localises to the host apical cell membrane. The enzyme catalyses S-ubiquitinyl-[E2 ubiquitin-conjugating enzyme]-L-cysteine + [acceptor protein]-L-lysine = [E2 ubiquitin-conjugating enzyme]-L-cysteine + N(6)-ubiquitinyl-[acceptor protein]-L-lysine.. With respect to regulation, exists in an autoinhibited state in the absence of substrate protein, due to interactions of the leucine-rich repeat domain with the catalytic domain. Is activated upon binding to a substrate protein. Functionally, effector proteins function to alter host cell physiology and promote bacterial survival in host tissues. This protein is an E3 ubiquitin ligase that interferes with host's ubiquitination pathway. The polypeptide is E3 ubiquitin-protein ligase SspH2 (sspH2) (Salmonella typhimurium (strain LT2 / SGSC1412 / ATCC 700720)).